Consider the following 299-residue polypeptide: Acetylglutamate kinase (299 aa).

Substrate-binding positions include 70-71 (GG), Arg-92, and Asn-186.

The protein belongs to the acetylglutamate kinase family. ArgB subfamily.

It localises to the cytoplasm. It carries out the reaction N-acetyl-L-glutamate + ATP = N-acetyl-L-glutamyl 5-phosphate + ADP. Its pathway is amino-acid biosynthesis; L-arginine biosynthesis; N(2)-acetyl-L-ornithine from L-glutamate: step 2/4. Catalyzes the ATP-dependent phosphorylation of N-acetyl-L-glutamate. This Caldanaerobacter subterraneus subsp. tengcongensis (strain DSM 15242 / JCM 11007 / NBRC 100824 / MB4) (Thermoanaerobacter tengcongensis) protein is Acetylglutamate kinase.